A 382-amino-acid chain; its full sequence is 1-deoxy-D-xylulose 5-phosphate reductoisomerase (382 aa).

The NADPH site is built by Thr10, Gly11, Ser12, Ile13, Gly36, and Asn122. Residue Lys123 coordinates 1-deoxy-D-xylulose 5-phosphate. Position 124 (Glu124) interacts with NADPH. Mn(2+) is bound at residue Asp148. Positions 149, 150, 174, and 197 each coordinate 1-deoxy-D-xylulose 5-phosphate. Residue Glu150 coordinates Mn(2+). Gly203 is a binding site for NADPH. Residues Ser210, Asn215, Lys216, and Glu219 each contribute to the 1-deoxy-D-xylulose 5-phosphate site. A Mn(2+)-binding site is contributed by Glu219.

It belongs to the DXR family. Mg(2+) is required as a cofactor. Requires Mn(2+) as cofactor.

The catalysed reaction is 2-C-methyl-D-erythritol 4-phosphate + NADP(+) = 1-deoxy-D-xylulose 5-phosphate + NADPH + H(+). It functions in the pathway isoprenoid biosynthesis; isopentenyl diphosphate biosynthesis via DXP pathway; isopentenyl diphosphate from 1-deoxy-D-xylulose 5-phosphate: step 1/6. In terms of biological role, catalyzes the NADPH-dependent rearrangement and reduction of 1-deoxy-D-xylulose-5-phosphate (DXP) to 2-C-methyl-D-erythritol 4-phosphate (MEP). This Pelodictyon phaeoclathratiforme (strain DSM 5477 / BU-1) protein is 1-deoxy-D-xylulose 5-phosphate reductoisomerase.